Reading from the N-terminus, the 191-residue chain is Protein GrpE (191 aa).

Belongs to the GrpE family. Homodimer.

Its subcellular location is the cytoplasm. In terms of biological role, participates actively in the response to hyperosmotic and heat shock by preventing the aggregation of stress-denatured proteins, in association with DnaK and GrpE. It is the nucleotide exchange factor for DnaK and may function as a thermosensor. Unfolded proteins bind initially to DnaJ; upon interaction with the DnaJ-bound protein, DnaK hydrolyzes its bound ATP, resulting in the formation of a stable complex. GrpE releases ADP from DnaK; ATP binding to DnaK triggers the release of the substrate protein, thus completing the reaction cycle. Several rounds of ATP-dependent interactions between DnaJ, DnaK and GrpE are required for fully efficient folding. The polypeptide is Protein GrpE (Listeria monocytogenes serotype 4b (strain CLIP80459)).